A 454-amino-acid chain; its full sequence is Bifunctional protein GlmU (454 aa).

Positions 1–240 (MNVSVVILAA…EEEFMGVNSK (240 aa)) are pyrophosphorylase. Residues 8 to 11 (LAAG), Lys-22, and 87 to 88 (GT) each bind UDP-N-acetyl-alpha-D-glucosamine. Asp-119 serves as a coordination point for Mg(2+). Residues Gly-152, Glu-166, Asn-181, and Asn-238 each coordinate UDP-N-acetyl-alpha-D-glucosamine. Residue Asn-238 participates in Mg(2+) binding. The linker stretch occupies residues 241–261 (IQLACAQEIMLQRLREKAMEQ). The N-acetyltransferase stretch occupies residues 262-454 (GVIMNLPHTI…SDKNEEKKEQ (193 aa)). UDP-N-acetyl-alpha-D-glucosamine contacts are provided by Arg-325 and Lys-342. His-353 acts as the Proton acceptor in catalysis. Positions 356 and 367 each coordinate UDP-N-acetyl-alpha-D-glucosamine. Residues Ala-370, 376 to 377 (NY), Ser-395, Ala-413, and Arg-430 each bind acetyl-CoA.

The protein in the N-terminal section; belongs to the N-acetylglucosamine-1-phosphate uridyltransferase family. In the C-terminal section; belongs to the transferase hexapeptide repeat family. In terms of assembly, homotrimer. Mg(2+) serves as cofactor.

Its subcellular location is the cytoplasm. It catalyses the reaction alpha-D-glucosamine 1-phosphate + acetyl-CoA = N-acetyl-alpha-D-glucosamine 1-phosphate + CoA + H(+). The enzyme catalyses N-acetyl-alpha-D-glucosamine 1-phosphate + UTP + H(+) = UDP-N-acetyl-alpha-D-glucosamine + diphosphate. The protein operates within nucleotide-sugar biosynthesis; UDP-N-acetyl-alpha-D-glucosamine biosynthesis; N-acetyl-alpha-D-glucosamine 1-phosphate from alpha-D-glucosamine 6-phosphate (route II): step 2/2. Its pathway is nucleotide-sugar biosynthesis; UDP-N-acetyl-alpha-D-glucosamine biosynthesis; UDP-N-acetyl-alpha-D-glucosamine from N-acetyl-alpha-D-glucosamine 1-phosphate: step 1/1. It participates in bacterial outer membrane biogenesis; LPS lipid A biosynthesis. Functionally, catalyzes the last two sequential reactions in the de novo biosynthetic pathway for UDP-N-acetylglucosamine (UDP-GlcNAc). The C-terminal domain catalyzes the transfer of acetyl group from acetyl coenzyme A to glucosamine-1-phosphate (GlcN-1-P) to produce N-acetylglucosamine-1-phosphate (GlcNAc-1-P), which is converted into UDP-GlcNAc by the transfer of uridine 5-monophosphate (from uridine 5-triphosphate), a reaction catalyzed by the N-terminal domain. The chain is Bifunctional protein GlmU from Helicobacter hepaticus (strain ATCC 51449 / 3B1).